The primary structure comprises 780 residues: Gelsolin (780 aa).

The first 25 residues, 1–25 (MAPYCSSLRSALLVLALCALSPSHA), serve as a signal peptide directing secretion. Positions 28–48 (ASRGRAQERAPQSRVSETRPS) are disordered. Residues 51–174 (VVEHPEFLKA…YKKGGVASGF (124 aa)) are actin-severing. The Gelsolin-like 1 repeat unit spans residues 74 to 155 (FDLVPVPPNL…EVQGFESSTF (82 aa)). Phosphotyrosine is present on Tyr84. Residues Gly90, Asp91, Glu122, Asp134, Gly139, and Ala141 each contribute to the Ca(2+) site. The tract at residues 121–124 (DESG) is actin-actin interfilament contact point. Residue 160-167 (KSGLKYKK) participates in a 1,2-diacyl-sn-glycero-3-phospho-(1D-myo-inositol-4,5-bisphosphate) binding. Val170 contributes to the Ca(2+) binding site. Residue 186–194 (RLFQVKGRR) participates in a 1,2-diacyl-sn-glycero-3-phospho-(1D-myo-inositol-4,5-bisphosphate) binding. The Gelsolin-like 2 repeat unit spans residues 196–268 (VRATEVPVSW…SEEGSEPEAM (73 aa)). Residues Gly211 and Asp212 each coordinate Ca(2+). Cys213 and Cys226 are oxidised to a cystine. Glu234, Asp284, Glu327, Asp328, and Glu352 together coordinate Ca(2+). Residues 244–286 (GIRDNERSGRAQVHVSEEGSEPEAMLQVLGPKPDLPQGTEDTA) form a disordered region. A Gelsolin-like 3 repeat occupies 315 to 387 (DENPFAQSAL…LPEGGETPLF (73 aa)). 2 positions are modified to phosphotyrosine: Tyr407 and Tyr463. Residues 432 to 780 (AAQHGMDDDG…LDRALAELAA (349 aa)) form an actin-binding, Ca-sensitive region. Residues 453-534 (SNKVLVDPAT…VQGKEPAHLM (82 aa)) form a Gelsolin-like 4 repeat. Residues Gly469, Asp470, Glu500, Asp512, Gly517, Pro519, and Thr549 each coordinate Ca(2+). A Gelsolin-like 5 repeat occupies 576–640 (AVEVMPKAGA…EEGSEPDGFW (65 aa)). An N6-acetyllysine modification is found at Lys582. 2 residues coordinate Ca(2+): Asn589 and Asp590. A Phosphotyrosine modification is found at Tyr601. A Ca(2+)-binding site is contributed by Glu612. Tyr649 carries the phosphotyrosine modification. One copy of the Gelsolin-like 6 repeat lies at 679–754 (IEEVPGELMQ…VRQGFEPPSF (76 aa)). 3 residues coordinate Ca(2+): Asp694, Asp695, and Glu717. Thr740 is subject to Phosphothreonine.

Belongs to the villin/gelsolin family. As to quaternary structure, binds to actin and to fibronectin. Identified in a complex composed of ACTA1, COBL, GSN and TMSB4X. Interacts with the inactive form of EIF2AK2/PKR. Interacts with FLII. In terms of processing, phosphorylated on tyrosine residues in vitro.

Its subcellular location is the secreted. It localises to the cytoplasm. The protein resides in the cytoskeleton. Calcium-regulated, actin-modulating protein that binds to the plus (or barbed) ends of actin monomers or filaments, preventing monomer exchange (end-blocking or capping). It can promote the assembly of monomers into filaments (nucleation) as well as sever filaments already formed. Plays a role in ciliogenesis. The chain is Gelsolin (Gsn) from Rattus norvegicus (Rat).